Here is an 805-residue protein sequence, read N- to C-terminus: Probable exo-1,4-beta-xylosidase xlnD (805 aa).

The signal sequence occupies residues Met1–Gly17. 5 N-linked (GlcNAc...) asparagine glycosylation sites follow: Asn20, Asn115, Asn140, Asn235, and Asn244. The active site involves Asp308. N-linked (GlcNAc...) asparagine glycosylation is found at Asn350, Asn383, Asn405, Asn434, Asn445, Asn486, Asn490, Asn622, Asn653, Asn667, Asn689, and Asn711.

Belongs to the glycosyl hydrolase 3 family.

It is found in the secreted. The enzyme catalyses Hydrolysis of (1-&gt;4)-beta-D-xylans, to remove successive D-xylose residues from the non-reducing termini.. It participates in glycan degradation; xylan degradation. Its function is as follows. Xylan 1,4-beta-xylosidase involved in the hydrolysis of xylan, a major structural heterogeneous polysaccharide found in plant biomass representing the second most abundant polysaccharide in the biosphere, after cellulose. The sequence is that of Probable exo-1,4-beta-xylosidase xlnD (xlnD) from Aspergillus aculeatus.